Consider the following 201-residue polypeptide: 3-isopropylmalate dehydratase small subunit (201 aa).

Belongs to the LeuD family. LeuD type 1 subfamily. In terms of assembly, heterodimer of LeuC and LeuD.

It carries out the reaction (2R,3S)-3-isopropylmalate = (2S)-2-isopropylmalate. Its pathway is amino-acid biosynthesis; L-leucine biosynthesis; L-leucine from 3-methyl-2-oxobutanoate: step 2/4. Catalyzes the isomerization between 2-isopropylmalate and 3-isopropylmalate, via the formation of 2-isopropylmaleate. The chain is 3-isopropylmalate dehydratase small subunit from Cereibacter sphaeroides (strain ATCC 17029 / ATH 2.4.9) (Rhodobacter sphaeroides).